The following is a 102-amino-acid chain: MNNAHEENISSVTGFKSTSGSPAIGSSLPGRSGEGRSSSSSSGSTALLAVVNSTLKAIFSNTLDSIFHMVCTDSDKRLSSEFHCLQSMFNLQLFVNLGCPLS.

A disordered region spans residues 1–43 (MNNAHEENISSVTGFKSTSGSPAIGSSLPGRSGEGRSSSSSSG). Positions 9–21 (ISSVTGFKSTSGS) are enriched in polar residues. A compositionally biased stretch (low complexity) spans 25-43 (GSSLPGRSGEGRSSSSSSG).

This is an uncharacterized protein from Saccharomyces cerevisiae (strain ATCC 204508 / S288c) (Baker's yeast).